The primary structure comprises 308 residues: HPr kinase/phosphorylase (308 aa).

Active-site residues include His-138 and Lys-159. 153-160 (GESGLGKS) lines the ATP pocket. Residue Ser-160 coordinates Mg(2+). Asp-177 (proton acceptor; for phosphorylation activity. Proton donor; for dephosphorylation activity) is an active-site residue. Residues 201 to 210 (LEVRGLGLLD) are important for the catalytic mechanism of both phosphorylation and dephosphorylation. Glu-202 is a Mg(2+) binding site. The active site involves Arg-243. Positions 264-269 (QVAAGR) are important for the catalytic mechanism of dephosphorylation.

This sequence belongs to the HPrK/P family. Homohexamer. It depends on Mg(2+) as a cofactor.

It catalyses the reaction [HPr protein]-L-serine + ATP = [HPr protein]-O-phospho-L-serine + ADP + H(+). The catalysed reaction is [HPr protein]-O-phospho-L-serine + phosphate + H(+) = [HPr protein]-L-serine + diphosphate. Functionally, catalyzes the ATP- as well as the pyrophosphate-dependent phosphorylation of a specific serine residue in HPr, a phosphocarrier protein of the phosphoenolpyruvate-dependent sugar phosphotransferase system (PTS). HprK/P also catalyzes the pyrophosphate-producing, inorganic phosphate-dependent dephosphorylation (phosphorolysis) of seryl-phosphorylated HPr (P-Ser-HPr). The protein is HPr kinase/phosphorylase of Bordetella avium (strain 197N).